The chain runs to 480 residues: Aspartyl/glutamyl-tRNA(Asn/Gln) amidotransferase subunit B (480 aa).

This sequence belongs to the GatB/GatE family. GatB subfamily. As to quaternary structure, heterotrimer of A, B and C subunits.

It catalyses the reaction L-glutamyl-tRNA(Gln) + L-glutamine + ATP + H2O = L-glutaminyl-tRNA(Gln) + L-glutamate + ADP + phosphate + H(+). The catalysed reaction is L-aspartyl-tRNA(Asn) + L-glutamine + ATP + H2O = L-asparaginyl-tRNA(Asn) + L-glutamate + ADP + phosphate + 2 H(+). Its function is as follows. Allows the formation of correctly charged Asn-tRNA(Asn) or Gln-tRNA(Gln) through the transamidation of misacylated Asp-tRNA(Asn) or Glu-tRNA(Gln) in organisms which lack either or both of asparaginyl-tRNA or glutaminyl-tRNA synthetases. The reaction takes place in the presence of glutamine and ATP through an activated phospho-Asp-tRNA(Asn) or phospho-Glu-tRNA(Gln). This Streptococcus agalactiae serotype III (strain NEM316) protein is Aspartyl/glutamyl-tRNA(Asn/Gln) amidotransferase subunit B.